The following is a 104-amino-acid chain: L-rhamnose mutarotase (104 aa).

A substrate-binding site is contributed by Tyr-18. His-22 functions as the Proton donor in the catalytic mechanism. Substrate contacts are provided by residues Tyr-41 and 76–77 (WW).

It belongs to the rhamnose mutarotase family. In terms of assembly, homodimer.

It is found in the cytoplasm. It carries out the reaction alpha-L-rhamnose = beta-L-rhamnose. The protein operates within carbohydrate metabolism; L-rhamnose metabolism. Functionally, involved in the anomeric conversion of L-rhamnose. This chain is L-rhamnose mutarotase, found in Acidiphilium cryptum (strain JF-5).